A 242-amino-acid polypeptide reads, in one-letter code: NAD-dependent protein deacylase 1 (242 aa).

Positions 1–242 constitute a Deacetylase sirtuin-type domain; sequence MDFKILKEKL…FAMKFEEKEG (242 aa). 21 to 40 contributes to the NAD(+) binding site; it reads GAGISKESGIPTFRGEDGLW. Positions 65 and 68 each coordinate substrate. NAD(+) is bound at residue 99–102; sequence QNVD. His-117 acts as the Proton acceptor in catalysis. Zn(2+) contacts are provided by Cys-125, Cys-128, Cys-146, and Cys-149. NAD(+) is bound by residues 186 to 188 and Glu-241; that span reads GTS.

Belongs to the sirtuin family. Class III subfamily. Zn(2+) is required as a cofactor.

It is found in the cytoplasm. It catalyses the reaction N(6)-acetyl-L-lysyl-[protein] + NAD(+) + H2O = 2''-O-acetyl-ADP-D-ribose + nicotinamide + L-lysyl-[protein]. The catalysed reaction is N(6)-succinyl-L-lysyl-[protein] + NAD(+) + H2O = 2''-O-succinyl-ADP-D-ribose + nicotinamide + L-lysyl-[protein]. Functionally, NAD-dependent lysine deacetylase and desuccinylase that specifically removes acetyl and succinyl groups on target proteins. Modulates the activities of several proteins which are inactive in their acylated form. In Caldanaerobacter subterraneus subsp. tengcongensis (strain DSM 15242 / JCM 11007 / NBRC 100824 / MB4) (Thermoanaerobacter tengcongensis), this protein is NAD-dependent protein deacylase 1.